The following is a 204-amino-acid chain: Probable UbiX-like flavin prenyltransferase (204 aa).

FMN-binding positions include 21–23, Ser-47, 98–101, and Arg-133; these read GAT and SMKS.

It belongs to the UbiX/PAD1 family. YclB subfamily. In terms of assembly, homododecamer.

The enzyme catalyses dimethylallyl phosphate + FMNH2 = prenylated FMNH2 + phosphate. Its function is as follows. Involved in the non-oxidative decarboxylation and detoxification of phenolic derivatives under both aerobic and anaerobic conditions. Flavin prenyltransferase that catalyzes the synthesis of the prenylated FMN cofactor (prenyl-FMN) for phenolic acid decarboxylase. This chain is Probable UbiX-like flavin prenyltransferase, found in Bacillus subtilis (strain 168).